Here is a 235-residue protein sequence, read N- to C-terminus: Phosphoribosylaminoimidazole-succinocarboxamide synthase (235 aa).

It belongs to the SAICAR synthetase family.

It catalyses the reaction 5-amino-1-(5-phospho-D-ribosyl)imidazole-4-carboxylate + L-aspartate + ATP = (2S)-2-[5-amino-1-(5-phospho-beta-D-ribosyl)imidazole-4-carboxamido]succinate + ADP + phosphate + 2 H(+). It participates in purine metabolism; IMP biosynthesis via de novo pathway; 5-amino-1-(5-phospho-D-ribosyl)imidazole-4-carboxamide from 5-amino-1-(5-phospho-D-ribosyl)imidazole-4-carboxylate: step 1/2. The polypeptide is Phosphoribosylaminoimidazole-succinocarboxamide synthase (Exiguobacterium sibiricum (strain DSM 17290 / CCUG 55495 / CIP 109462 / JCM 13490 / 255-15)).